A 790-amino-acid polypeptide reads, in one-letter code: Cadherin-20 (790 aa).

Positions 1–25 (MSCKRSYHRHCALVYYMVLLDLTNA) are cleaved as a signal peptide. The propeptide occupies 26–52 (VFEFSHPLIRDSGNSQSRQLLHHRLKR). The Extracellular portion of the chain corresponds to 26 to 612 (VFEFSHPLIR…PYTLPISLSR (587 aa)). 5 Cadherin domains span residues 54–158 (WVWN…EPKF), 159–267 (LDGP…PPRF), 268–382 (PQKH…PPVF), 383–487 (GSSF…APTF), and 487–605 (FTKF…EPYT). N254, N283, N413, N454, and N535 each carry an N-linked (GlcNAc...) asparagine glycan. Residues 613-633 (GALIAILTCIFVLLVLVLLIL) form a helical membrane-spanning segment. Residues 634–790 (SMRRHRKQPY…YGTKDNNGSL (157 aa)) lie on the Cytoplasmic side of the membrane.

Detected in embryonic posterior neural plate, embryonic neural tube, sulcus limitans and embryonic kidney.

The protein localises to the cell membrane. In terms of biological role, cadherins are calcium-dependent cell adhesion proteins. They preferentially interact with themselves in a homophilic manner in connecting cells; cadherins may thus contribute to the sorting of heterogeneous cell types. The polypeptide is Cadherin-20 (cdh20) (Xenopus laevis (African clawed frog)).